The sequence spans 281 residues: Aldo-keto reductase MMAR_1744 (281 aa).

Tyrosine 56 (proton donor) is an active-site residue. NADPH-binding residues include leucine 196, isoleucine 234, serine 237, threonine 245, asparagine 246, and arginine 272.

Belongs to the aldo/keto reductase family.

This Mycobacterium marinum (strain ATCC BAA-535 / M) protein is Aldo-keto reductase MMAR_1744.